Reading from the N-terminus, the 1218-residue chain is NACHT, LRR and PYD domains-containing protein 1 allele 2 (1218 aa).

Positions 1-61 (MEESQSKQES…SLPGWSSTSK (61 aa)) are disordered. The segment covering 7–29 (KQESNTRVAQHGSQQDVDPTFQT) has biased composition (polar residues). The NACHT domain occupies 175–484 (QLVIIEGAAG…EFFAAMSYIL (310 aa)). Residue 181-188 (GAAGIGKS) coordinates ATP. 3 LRR repeats span residues 343-364 (KERN…LTLC), 673-693 (NLEE…RSLC), and 730-750 (RLAE…RQLC). A compositionally biased stretch (polar residues) spans 799 to 815 (TMPTENTDGEESLTSSK). A disordered region spans residues 799-842 (TMPTENTDGEESLTSSKQQQQQSGDKHMEPLGTDDDFWGPSGPV). Residues 835 to 968 (FWGPSGPVST…HFAVLENPSF (134 aa)) form a ZU5 region. Residues 835–1118 (FWGPSGPVST…LRPALPRMAS (284 aa)) form the FIIND domain. The UPA stretch occupies residues 969 to 1118 (SPMGVLLRMI…LRPALPRMAS (150 aa)). One can recognise a CARD domain in the interval 1122–1211 (DAPALLHFVD…HLIMDLLEKS (90 aa)).

This sequence belongs to the NLRP family. Interacts (via LRR repeats) with BCL2 and BCL2L1 (via the loop between motifs BH4 and BH3). Interacts with NOD2; this interaction is enhanced in the presence of muramyl dipeptide (MDP) and increases IL1B release. Interacts with EIF2AK2/PKR; this interaction requires EIF2AK2 activity, is accompanied by EIF2AK2 autophosphorylation and promotes inflammasome assembly in response to danger-associated signals. Interacts with MEFV; this interaction targets Nlrp1a to degradation by autophagy, hence preventing excessive IL1B- and IL18-mediated inflammation. Interacts with DPP9; leading to inhibit activation of the inflammasome. DPP9 acts via formation of a ternary complex, composed of a DPP9 homodimer, one full-length NLRP1 protein, and one cleaved C-terminus of Nlrp1a (NACHT, LRR and PYD domains-containing protein 1a, C-terminus). Interacts with DPP8; leading to inhibit activation of the inflammasome, probably via formation of a ternary complex with DPP8. As to quaternary structure, interacts with the C-terminal part of Nlrp1a (NACHT, LRR and PYD domains-containing protein 1a, C-terminus) in absence of pathogens and other damage-associated signals. In terms of assembly, interacts with the N-terminal part of Nlrp1a (NACHT, LRR and PYD domains-containing protein 1a, N-terminus) in absence of pathogens and other damage-associated signals. Homomultimer; forms the Nlrp1a inflammasome polymeric complex, a filament composed of homopolymers of this form in response to pathogens and other damage-associated signals. The Nlrp1a inflammasome polymeric complex directly recruits pro-caspase-1 (proCASP1) independently of PYCARD/ASC. Interacts (via CARD domain) with CASP1 (via CARD domain); leading to CASP1 activation. Post-translationally, autocatalytically cleaved. Autocatalytic cleavage in FIIND region occurs constitutively, prior to activation signals, and is required for inflammasome activity (IL1B release), possibly by facilitating CASP1 binding. Both N- and C-terminal parts remain associated non-covalently. (Microbial infection) Cleavage by B.anthracis lethal toxin (LT) endopeptidase promotes ubiquitination and degradation of the N-terminal part, releasing the cleaved C-terminal part of the protein (NACHT, LRR and PYD domains-containing protein 1a, C-terminus), which polymerizes and forms the Nlrp1a inflammasome. In terms of processing, ubiquitinated in response to pathogen-associated signals, leading to its degradation by the proteasome and subsequent release of the cleaved C-terminal part of the protein (NACHT, LRR and PYD domains-containing protein 1a, C-terminus), which polymerizes and forms the Nlrp1a inflammasome.

It localises to the cytoplasm. The protein resides in the cytosol. Its subcellular location is the nucleus. It is found in the inflammasome. With respect to regulation, activated by cleavage by B.anthracis lethal toxin (LT) endopeptidase. Cleavage by LT promotes ubiquitination and degradation of the N-terminal part, releasing the cleaved C-terminal part of the protein (NACHT, LRR and PYD domains-containing protein 1a, C-terminus), which polymerizes and forms the Nlrp1a inflammasome. Nlrp1a inflammasome is inhibited by DPP8 and DPP9, which sequester the C-terminal fragment of Nlrp1a (NACHT, LRR and PYD domains-containing protein 1a, C-terminus) in a ternary complex, thereby preventing Nlrp1a oligomerization and activation. Nlrp1a inflammasome is weakly activated by Val-boroPro (Talabostat, PT-100), an inhibitor of dipeptidyl peptidases DPP8 and DPP9. Val-boroPro relieves inhibition of DPP8 and/or DPP9 by promoting disruption of the ternary complex, releasing its C-terminal part from autoinhibition. Weakly activated by Toxoplasma gondii. Functionally, acts as the sensor component of the Nlrp1a inflammasome, which mediates inflammasome activation in response to various pathogen-associated signals, leading to subsequent pyroptosis. Inflammasomes are supramolecular complexes that assemble in the cytosol in response to pathogens and other damage-associated signals and play critical roles in innate immunity and inflammation. Acts as a recognition receptor (PRR): recognizes specific pathogens and other damage-associated signals, such as B.anthracis lethal toxin (LT) or Val-boroPro inhibitor, and mediates the formation of the inflammasome polymeric complex. In response to pathogen-associated signals, the N-terminal part of Nlrp1a is degraded by the proteasome, releasing the cleaved C-terminal part of the protein (NACHT, LRR and PYD domains-containing protein 1a, C-terminus), which polymerizes to initiate the formation of the inflammasome complex: the inflammasome directly recruits pro-caspase-1 (proCASP1) independently of PYCARD/ASC and promotes caspase-1 (CASP1) activation, which subsequently cleaves and activates inflammatory cytokines IL1B and IL18 and gasdermin-D (GSDMD), leading to pyroptosis. In the absence of GSDMD expression, the Nlrp1a inflammasome is able to recruit and activate CASP8, leading to activation of gasdermin-E (GSDME). In terms of biological role, constitutes the precursor of the Nlrp1a inflammasome, which mediates autoproteolytic processing within the FIIND domain to generate the N-terminal and C-terminal parts, which are associated non-covalently in absence of pathogens and other damage-associated signals. Its function is as follows. Regulatory part that prevents formation of the Nlrp1a inflammasome: in absence of pathogens and other damage-associated signals, interacts with the C-terminal part of Nlrp1a (NACHT, LRR and PYD domains-containing protein 1a, C-terminus), preventing activation of the Nlrp1a inflammasome. In response to pathogen-associated signals, this part is ubiquitinated by the N-end rule pathway and degraded by the proteasome, releasing the cleaved C-terminal part of the protein, which polymerizes and forms the Nlrp1a inflammasome. Constitutes the active part of the Nlrp1a inflammasome. In absence of pathogens and other damage-associated signals, interacts with the N-terminal part of Nlrp1a (NACHT, LRR and PYD domains-containing protein 1a, N-terminus), preventing activation of the Nlrp1a inflammasome. In response to pathogen-associated signals, the N-terminal part of Nlrp1a is degraded by the proteasome, releasing this form, which polymerizes to form the Nlrp1a inflammasome complex: the Nlrp1a inflammasome complex then directly recruits pro-caspase-1 (proCASP1) and promotes caspase-1 (CASP1) activation, leading to gasdermin-D (GSDMD) cleavage and subsequent pyroptosis. The protein is NACHT, LRR and PYD domains-containing protein 1 allele 2 of Rattus norvegicus (Rat).